The following is a 406-amino-acid chain: ATP-dependent RNA helicase eIF4A (406 aa).

A Q motif motif is present at residues 25-53 (DSFDAMDLKPELLRGVYAYGFERPSAIQQ). The region spanning 56 to 226 (ILPIIKGNDV…TKFMRDPVRI (171 aa)) is the Helicase ATP-binding domain. 69-76 (AQSGTGKT) is an ATP binding site. Residues 174-177 (DEAD) carry the DEAD box motif. One can recognise a Helicase C-terminal domain in the interval 237–398 (GIKQFYIAVE…EMPMNVAGKF (162 aa)).

The protein belongs to the DEAD box helicase family. eIF4A subfamily. Component of the eIF4F complex, which composition varies with external and internal environmental conditions. It is composed of at least eIF4A, eIF4E and eIF4G.

The protein resides in the cytoplasm. The catalysed reaction is ATP + H2O = ADP + phosphate + H(+). ATP-dependent RNA helicase which is a subunit of the eIF4F complex involved in cap recognition and is required for mRNA binding to ribosome. In the current model of translation initiation, eIF4A unwinds RNA secondary structures in the 5'-UTR of mRNAs which is necessary to allow efficient binding of the small ribosomal subunit, and subsequent scanning for the initiator codon. This chain is ATP-dependent RNA helicase eIF4A (tif1), found in Aspergillus fumigatus (strain ATCC MYA-4609 / CBS 101355 / FGSC A1100 / Af293) (Neosartorya fumigata).